The sequence spans 177 residues: 18.9 kDa heat shock protein (177 aa).

The interval 1-35 is disordered; that stretch reads MSMITSMLGRKQNAQQKGGGGGGRTGGGGGGEIEP. The span at 17-32 shows a compositional bias: gly residues; that stretch reads KGGGGGGRTGGGGGGE. One can recognise a sHSP domain in the interval 63-177; sequence AAGVPSTASM…PHARIIPITN (115 aa).

It belongs to the small heat shock protein (HSP20) family. In terms of assembly, may form oligomeric structures.

The protein resides in the cytoplasm. The sequence is that of 18.9 kDa heat shock protein (HSP18.9) from Oryza sativa subsp. japonica (Rice).